We begin with the raw amino-acid sequence, 193 residues long: ATP synthase subunit b 1 (193 aa).

Positions 9-28 are disordered; sequence QEADHTAGETHTETGVAEGG. Over residues 10–20 the composition is skewed to basic and acidic residues; it reads EADHTAGETHT. A helical membrane pass occupies residues 40 to 59; that stretch reads TYPSQLLWLAITFGLFYLFL.

This sequence belongs to the ATPase B chain family. As to quaternary structure, F-type ATPases have 2 components, F(1) - the catalytic core - and F(0) - the membrane proton channel. F(1) has five subunits: alpha(3), beta(3), gamma(1), delta(1), epsilon(1). F(0) has three main subunits: a(1), b(2) and c(10-14). The alpha and beta chains form an alternating ring which encloses part of the gamma chain. F(1) is attached to F(0) by a central stalk formed by the gamma and epsilon chains, while a peripheral stalk is formed by the delta and b chains.

It is found in the cell inner membrane. In terms of biological role, f(1)F(0) ATP synthase produces ATP from ADP in the presence of a proton or sodium gradient. F-type ATPases consist of two structural domains, F(1) containing the extramembraneous catalytic core and F(0) containing the membrane proton channel, linked together by a central stalk and a peripheral stalk. During catalysis, ATP synthesis in the catalytic domain of F(1) is coupled via a rotary mechanism of the central stalk subunits to proton translocation. Functionally, component of the F(0) channel, it forms part of the peripheral stalk, linking F(1) to F(0). This is ATP synthase subunit b 1 from Chelativorans sp. (strain BNC1).